We begin with the raw amino-acid sequence, 505 residues long: Flagellin (505 aa).

The protein belongs to the bacterial flagellin family.

The protein resides in the secreted. The protein localises to the bacterial flagellum. Functionally, flagellin is the subunit protein which polymerizes to form the filaments of bacterial flagella. The chain is Flagellin (fliC) from Salmonella budapest.